Consider the following 526-residue polypeptide: Arginine/ornithine antiporter ArcD1 (526 aa).

A run of 14 helical transmembrane segments spans residues 8-28 (GIGLAALVAIIVSGAIGGGVF), 41-61 (GGVVISWIVIGFGILMLVLSL), 88-108 (FISGWGYWLSAWAGNIAFAVL), 128-148 (LTILSVIVVSIVSWGLTLLVM), 160-180 (IVLVAKLIPLFVFVIAGIVTF), 220-240 (VKGSLMVMIWVFVGIEGAAMM), 255-275 (IFGLIALLVIYILLSLLPFGF), 297-317 (VGGWGGSLMAIGLVISLLGAW), 354-374 (LLLTQLIVQIFLIVTYFVADA), 378-398 (FVYLCTAVIMICYALVGLYLF), 407-427 (TSNIIIGFIAAAFQILALYYS), 428-448 (GWQFVWLSLILYAVGFILYAL), 466-486 (FILTVLGILAVFGVYGNWLGL), and 495-515 (NTLLVAVVPLIVVTFIVYFVV).

The protein belongs to the amino acid-polyamine-organocation (APC) superfamily. Basic amino acid/polyamine antiporter (APA) (TC 2.A.3.2) family.

Its subcellular location is the cell membrane. It carries out the reaction L-ornithine(in) + L-arginine(out) = L-ornithine(out) + L-arginine(in). Functionally, catalyzes electroneutral exchange between L-arginine and L-ornithine. Can also efficiently translocate L-histidine and L-lysine. ArcD1 is the main L-arginine/L-ornithine exchanger in the arginine deiminase (ADI) pathway. The protein is Arginine/ornithine antiporter ArcD1 of Lactococcus lactis subsp. cremoris (strain MG1363).